A 663-amino-acid chain; its full sequence is UvrABC system protein B (663 aa).

The Helicase ATP-binding domain maps to 30-414 (EGIKAGKRHQ…IEHTDKMVEQ (385 aa)). An ATP-binding site is contributed by 43-50 (GATGTGKT). The Beta-hairpin signature appears at 96–119 (YYDYYQPEAYVPSTDTFIEKDASI). One can recognise a Helicase C-terminal domain in the interval 434–600 (QIDDLLSEIQ…TINKKIHDLI (167 aa)). In terms of domain architecture, UVR spans 627 to 662 (QKTIDNIEKEMKQAAKDLDFEKATELRDMLFELKAE).

The protein belongs to the UvrB family. In terms of assembly, forms a heterotetramer with UvrA during the search for lesions. Interacts with UvrC in an incision complex.

Its subcellular location is the cytoplasm. Functionally, the UvrABC repair system catalyzes the recognition and processing of DNA lesions. A damage recognition complex composed of 2 UvrA and 2 UvrB subunits scans DNA for abnormalities. Upon binding of the UvrA(2)B(2) complex to a putative damaged site, the DNA wraps around one UvrB monomer. DNA wrap is dependent on ATP binding by UvrB and probably causes local melting of the DNA helix, facilitating insertion of UvrB beta-hairpin between the DNA strands. Then UvrB probes one DNA strand for the presence of a lesion. If a lesion is found the UvrA subunits dissociate and the UvrB-DNA preincision complex is formed. This complex is subsequently bound by UvrC and the second UvrB is released. If no lesion is found, the DNA wraps around the other UvrB subunit that will check the other stand for damage. The chain is UvrABC system protein B from Staphylococcus aureus (strain MSSA476).